An 826-amino-acid chain; its full sequence is Protein lozenge (826 aa).

3 disordered regions span residues 1–45 (MHLH…ASQT), 87–171 (PVSV…WSSS), and 214–263 (ASVG…NNNN). The segment covering 12 to 24 (PPSPSPNPTPTPS) has biased composition (pro residues). The segment covering 106-141 (SHHHHHLHHHYSPYHHAHPYHPPHPHAPHHHHHHHP) has biased composition (basic residues). A compositionally biased stretch (pro residues) spans 142–153 (PYPYPPAGPHPP). Residues 156 to 171 (VTSSSTSPTGNGWSSS) show a composition bias toward polar residues. The Runt domain occupies 275–403 (LVQKRQQEHP…TVDGPREPRS (129 aa)). The segment covering 774–798 (QQQQQQQQQQQQVHHPQQQQVESAG) has biased composition (low complexity). Positions 774–826 (QQQQQQQQQQQQVHHPQQQQVESAGEVGGSGAGGVESAREEDVGDLSQVWRPY) are disordered.

Expressed in the pupal eye during programmed cell death.

It localises to the nucleus. Involved in prepatterning photoreceptor precursors in the developing eye; in the larval eye disk it defines a subset of cells as an equipotential group that is competent to respond to the sevenless developmental signal and another subset that confer proper photoreceptor identity by positively regulating the homeo box gene Bar. Involved in the aop/pnt dynamic in a Ras-dependent manner to regulate pros expression. Promotes apoptosis in the pupal eye by directly activating aos and klu. Also modulates hid- and rpr-mediated cell death. Regulates amos function in olfactory sensilla development. This is Protein lozenge (lz) from Drosophila melanogaster (Fruit fly).